The primary structure comprises 282 residues: Putative 4-diphosphocytidyl-2-C-methyl-D-erythritol kinase (282 aa).

Lys-9 is a catalytic residue. 93-103 (PVSAGLAGGSA) contributes to the ATP binding site. Asp-135 is an active-site residue.

It belongs to the GHMP kinase family. IspE subfamily.

The enzyme catalyses 4-CDP-2-C-methyl-D-erythritol + ATP = 4-CDP-2-C-methyl-D-erythritol 2-phosphate + ADP + H(+). Functionally, catalyzes the phosphorylation of the position 2 hydroxy group of 4-diphosphocytidyl-2C-methyl-D-erythritol. This is Putative 4-diphosphocytidyl-2-C-methyl-D-erythritol kinase from Staphylococcus aureus (strain MRSA252).